We begin with the raw amino-acid sequence, 384 residues long: Deoxyguanosinetriphosphate triphosphohydrolase-like protein (384 aa).

The disordered stretch occupies residues 12 to 39 (ELASYASDPSKTRGRRHSEPPPENRTEF). The segment covering 28–39 (HSEPPPENRTEF) has biased composition (basic and acidic residues). The HD domain maps to 73 to 208 (RLTHSLEVAQ…ANLADEVAYN (136 aa)).

Belongs to the dGTPase family. Type 2 subfamily.

In Bordetella parapertussis (strain 12822 / ATCC BAA-587 / NCTC 13253), this protein is Deoxyguanosinetriphosphate triphosphohydrolase-like protein.